Here is a 528-residue protein sequence, read N- to C-terminus: Probable cyclic di-GMP phosphodiesterase PdeC (528 aa).

Transmembrane regions (helical) follow at residues 14-34 (GIIFLVLFPIILSLWIAFLWA) and 242-262 (HLIFALPAGILGSLVLLLLWL). The EAL domain occupies 268–520 (YLSPKRKLQR…VFMQWMEQLP (253 aa)).

It is found in the cell inner membrane. It catalyses the reaction 3',3'-c-di-GMP + H2O = 5'-phosphoguanylyl(3'-&gt;5')guanosine + H(+). In terms of biological role, phosphodiesterase (PDE) that catalyzes the hydrolysis of cyclic-di-GMP (c-di-GMP) to 5'-pGpG. Cyclic-di-GMP is a second messenger which controls cell surface-associated traits in bacteria. Overexpression reduces biofilm formation. The chain is Probable cyclic di-GMP phosphodiesterase PdeC from Escherichia coli (strain K12).